We begin with the raw amino-acid sequence, 204 residues long: Holliday junction branch migration complex subunit RuvA (204 aa).

The segment at 1–64 (MIGRLQGILL…EDAHLLFGFA (64 aa)) is domain I. A domain II region spans residues 65–143 (QKTDRTLFRE…GIKQSDFFVE (79 aa)). The segment at 144 to 155 (STHIPLSPSIES) is flexible linker. Residues 156-204 (HSESSSDEAISALIALGYKPAEAEKMVKRVAKPELTSEQVIREALKAAL) form a domain III region.

It belongs to the RuvA family. Homotetramer. Forms an RuvA(8)-RuvB(12)-Holliday junction (HJ) complex. HJ DNA is sandwiched between 2 RuvA tetramers; dsDNA enters through RuvA and exits via RuvB. An RuvB hexamer assembles on each DNA strand where it exits the tetramer. Each RuvB hexamer is contacted by two RuvA subunits (via domain III) on 2 adjacent RuvB subunits; this complex drives branch migration. In the full resolvosome a probable DNA-RuvA(4)-RuvB(12)-RuvC(2) complex forms which resolves the HJ.

Its subcellular location is the cytoplasm. The RuvA-RuvB-RuvC complex processes Holliday junction (HJ) DNA during genetic recombination and DNA repair, while the RuvA-RuvB complex plays an important role in the rescue of blocked DNA replication forks via replication fork reversal (RFR). RuvA specifically binds to HJ cruciform DNA, conferring on it an open structure. The RuvB hexamer acts as an ATP-dependent pump, pulling dsDNA into and through the RuvAB complex. HJ branch migration allows RuvC to scan DNA until it finds its consensus sequence, where it cleaves and resolves the cruciform DNA. This is Holliday junction branch migration complex subunit RuvA from Haemophilus influenzae (strain 86-028NP).